Consider the following 382-residue polypeptide: Sphingosine 1-phosphate receptor 1 (382 aa).

Val2 carries the post-translational modification N-acetylvaline. The Extracellular portion of the chain corresponds to 2 to 46; the sequence is VSTSIPEVKALRSSVSDYGNYDIIVRHYNYTGKLNIGAEKDHGIK. N6-acetyllysine is present on Lys10. The N-linked (GlcNAc...) asparagine glycan is linked to Asn30. Residues 47–68 traverse the membrane as a helical segment; sequence LTSVVFILICCFIILENIFVLL. Over 69–82 the chain is Cytoplasmic; it reads TIWKTKKFHRPMYY. Residues 83–104 form a helical membrane-spanning segment; sequence FIGNLALSDLLAGVAYTANLLL. Residues 105–116 lie on the Extracellular side of the membrane; that stretch reads SGATTYKLTPAQ. Residues 117–138 traverse the membrane as a helical segment; that stretch reads WFLREGSMFVALSASVFSLLAI. 120–121 contributes to the sphing-4-enine 1-phosphate binding site; it reads RE. At 139 to 160 the chain is on the cytoplasmic side; the sequence is AIERYITMLKMKLHNGSNSSRS. A helical membrane pass occupies residues 161 to 182; that stretch reads FLLISACWVISLILGGLPIMGW. Topologically, residues 183-196 are extracellular; the sequence is NCISSLSSCSTVLP. An intrachain disulfide couples Cys184 to Cys191. The helical transmembrane segment at 197–224 threads the bilayer; it reads LYHKHYILFCTTVFTLLLLSIVILYCRI. At 225–257 the chain is on the cytoplasmic side; it reads YSLVRTRSRRLTFRKNISKASRSSEKSLALLKT. Thr236 carries the phosphothreonine modification. Residues 258–278 traverse the membrane as a helical segment; that stretch reads VIIVLSVFIACWAPLFILLLL. 265–269 provides a ligand contact to sphing-4-enine 1-phosphate; it reads FIACW. At 279–289 the chain is on the extracellular side; that stretch reads DVGCKAKTCDI. Cys282 and Cys287 are oxidised to a cystine. The helical transmembrane segment at 290–310 threads the bilayer; it reads LYKAEYFLVLAVLNSGTNPII. At 311 to 382 the chain is on the cytoplasmic side; sequence YTLTNKEMRR…MSSGNVNSSS (72 aa). Cys328 carries the S-palmitoyl cysteine lipid modification. Residues 348-382 are disordered; the sequence is MEFSRSKSDNSSHPQKDDGDNPETIMSSGNVNSSS. 2 positions are modified to phosphoserine: Ser351 and Ser353. A compositionally biased stretch (basic and acidic residues) spans 351 to 366; sequence SRSKSDNSSHPQKDDG. Over residues 371 to 382 the composition is skewed to polar residues; sequence TIMSSGNVNSSS.

This sequence belongs to the G-protein coupled receptor 1 family. In terms of assembly, interacts with GNAI1 and GNAI3. Interacts with CD69; this interaction promotes S1PR1 degradation. In terms of processing, palmitoylated by ZDHHC5. Palmitoylation is required for targeting to plasma membrane, enabling G(i) coupling. In terms of tissue distribution, expressed in a wide variety of tissues with highest levels in brain, heart and spleen. Lower levels found in kidney, liver, lung, muscle, placenta, thymus, and uterus. Very low levels in intestine, stomach and testis. According to PubMed:9931453, expressed modestly in apparent endothelial cells surrounding some blood vessels (e.g. aortic trunk).

The protein localises to the cell membrane. It localises to the endosome. The protein resides in the membrane raft. In terms of biological role, G-protein coupled receptor for the bioactive lysosphingolipid sphingosine 1-phosphate (S1P) that seems to be coupled to the G(i) subclass of heteromeric G proteins. Signaling leads to the activation of RAC1, SRC, PTK2/FAK1 and MAP kinases. Plays an important role in cell migration, probably via its role in the reorganization of the actin cytoskeleton and the formation of lamellipodia in response to stimuli that increase the activity of the sphingosine kinase SPHK1. Required for normal chemotaxis toward sphingosine 1-phosphate. Required for normal embryonic heart development and normal cardiac morphogenesis. Plays an important role in the regulation of sprouting angiogenesis and vascular maturation. Inhibits sprouting angiogenesis to prevent excessive sprouting during blood vessel development. Required for normal egress of mature T-cells from the thymus into the blood stream and into peripheral lymphoid organs. Plays a role in the migration of osteoclast precursor cells, the regulation of bone mineralization and bone homeostasis. Plays a role in responses to oxidized 1-palmitoyl-2-arachidonoyl-sn-glycero-3-phosphocholine by pulmonary endothelial cells and in the protection against ventilator-induced lung injury. This Mus musculus (Mouse) protein is Sphingosine 1-phosphate receptor 1.